Consider the following 466-residue polypeptide: Cysteine--tRNA ligase (466 aa).

Cys29 is a Zn(2+) binding site. Positions 31–41 match the 'HIGH' region motif; it reads PTVYNYIHIGN. Residues Cys209, His234, and Glu238 each coordinate Zn(2+). Positions 266-270 match the 'KMSKS' region motif; the sequence is KMSKS. Lys269 is a binding site for ATP. Ser270 bears the Phosphoserine mark.

It belongs to the class-I aminoacyl-tRNA synthetase family. In terms of assembly, monomer. Zn(2+) is required as a cofactor.

It localises to the cytoplasm. The catalysed reaction is tRNA(Cys) + L-cysteine + ATP = L-cysteinyl-tRNA(Cys) + AMP + diphosphate. This chain is Cysteine--tRNA ligase, found in Bacillus velezensis (strain DSM 23117 / BGSC 10A6 / LMG 26770 / FZB42) (Bacillus amyloliquefaciens subsp. plantarum).